A 524-amino-acid chain; its full sequence is Protein hunchback (524 aa).

Disordered stretches follow at residues 42–86 and 101–187; these read IVKR…PQTQ and YNHN…DEQS. Positions 59-75 are enriched in low complexity; the sequence is SGSDFHSSSPSSDTSQD. Residues 76 to 86 show a composition bias toward polar residues; the sequence is LQHSYQSPQTQ. Basic and acidic residues-rich tracts occupy residues 118-127, 138-154, and 164-178; these read KSEKEEKDME, RKPD…EMSL, and TSEH…KSDN. 4 consecutive C2H2-type zinc fingers follow at residues 202 to 224, 231 to 253, 259 to 281, and 298 to 311; these read FKCK…SKVH, LTCP…LRNH, FQCN…MKSH, and YCHS…RYGH. The disordered stretch occupies residues 402–442; it reads DLSKPGCSYTGEQKSRRKGPAFKVDPTQVESEEEDEETSTT. C2H2-type zinc fingers lie at residues 471-493 and 499-523; these read NSCQ…MGYH and FTCN…RVSH.

This sequence belongs to the hunchback C2H2-type zinc-finger protein family.

The protein localises to the nucleus. In terms of biological role, gap class segmentation protein that controls development of head structures. This Tribolium castaneum (Red flour beetle) protein is Protein hunchback (hb).